The chain runs to 347 residues: NADH-ubiquinone oxidoreductase chain 2 (347 aa).

The next 11 helical transmembrane spans lie at 3 to 23 (PMTF…VLLS), 25 to 45 (HWFM…PVLM), 59 to 79 (YFLT…INTM), 96 to 116 (ILIT…FWVP), 127 to 147 (GLIL…QIYP), 149 to 169 (LNTN…GWGG), 178 to 198 (IMAY…TYNP), 201 to 221 (SLLN…LLII), 239 to 259 (IVTT…PLTG), 274 to 294 (NSLI…FFYM), and 326 to 346 (TAPL…LITL).

This sequence belongs to the complex I subunit 2 family. In terms of assembly, core subunit of respiratory chain NADH dehydrogenase (Complex I) which is composed of 45 different subunits. Interacts with TMEM242.

The protein resides in the mitochondrion inner membrane. The enzyme catalyses a ubiquinone + NADH + 5 H(+)(in) = a ubiquinol + NAD(+) + 4 H(+)(out). Functionally, core subunit of the mitochondrial membrane respiratory chain NADH dehydrogenase (Complex I) which catalyzes electron transfer from NADH through the respiratory chain, using ubiquinone as an electron acceptor. Essential for the catalytic activity and assembly of complex I. The sequence is that of NADH-ubiquinone oxidoreductase chain 2 from Sylvisorex ollula (Greater forest shrew).